Reading from the N-terminus, the 344-residue chain is G-protein coupled receptor str-217 (344 aa).

Residues 1–10 (MLLFQKTLSR) lie on the Extracellular side of the membrane. A helical membrane pass occupies residues 11 to 31 (VAAPISVAANLILILLIIFKS). Residues 32–39 (PAQMGNYK) are Cytoplasmic-facing. Residues 40–60 (YLLIGLSIFEMSYAVLDVVSE) traverse the membrane as a helical segment. The Extracellular portion of the chain corresponds to 61-88 (TTVLSIKKSFVVVVPYKDRSFGQETAMD). The helical transmembrane segment at 89–109 (INLIYCGFFGFSMGMFVVIFA) threads the bilayer. At 110–128 (YRSFLTTGNTILRKFEGFK) the chain is on the cytoplasmic side. Residues 129–149 (IISWFAYPLFYAIVWILVAWG) traverse the membrane as a helical segment. The Extracellular segment spans residues 150–195 (PLASFPEMDIVVRPFLLDELNMTVDEVAYTGRLFYSTIDNSLRYSA). N-linked (GlcNAc...) asparagine glycosylation occurs at Asn-170. The helical transmembrane segment at 196-216 (ILTGVLQWVLTASSLFLVIFF) threads the bilayer. The Cytoplasmic segment spans residues 217 to 256 (GLRCYFHYGKLVQLTDVQSIRLRQLQNQLFLALVCQATVP). A helical membrane pass occupies residues 257 to 277 (LILMHIPVTILYTCCVLNIVF). Over 278–279 (NP) the chain is Extracellular. The chain crosses the membrane as a helical span at residues 280 to 300 (FSVATTIALFPAIDPLPTIFI). Over 301 to 344 (VKNYRVALFEFVCPSCLCWSETLKHMGSNRITSYRSNTVNALSM) the chain is Cytoplasmic.

The protein belongs to the nematode receptor-like protein str family. As to expression, expressed in the ADL chemosensory neurons.

The protein localises to the cell membrane. Probable G-protein coupled receptor. This Caenorhabditis elegans protein is G-protein coupled receptor str-217.